The primary structure comprises 80 residues: MSCCGGNCGCGSSCQCGNGCGGCKYSEVEPTTTTTFLADATNKGSGAASGGSEMGAENGSCGCNTCKCGTSCGCSCCNCN.

It belongs to the metallothionein superfamily. Type 15 family. In terms of tissue distribution, highly expressed in stems. Expressed in leaves and rachis.

In terms of biological role, metallothioneins have a high content of cysteine residues that bind various heavy metals. The chain is Metallothionein-like protein 2B (MT2B) from Oryza sativa subsp. japonica (Rice).